Reading from the N-terminus, the 1355-residue chain is Phospholipid-transporting ATPase DRS2 (1355 aa).

The segment covering 1–15 has biased composition (basic and acidic residues); sequence MNDDRETPPKRKPGE. Residues 1 to 50 form a disordered region; the sequence is MNDDRETPPKRKPGEDDTLFDIDFLDDTTSHSGSRSKVTNSHANANYIPP. The interval 1–104 is involved in autoinhibition; the sequence is MNDDRETPPK…SDAYQPQSLR (104 aa). At 1 to 221 the chain is on the cytoplasmic side; the sequence is MNDDRETPPK…TFLPKFLFQE (221 aa). Over residues 16-26 the composition is skewed to acidic residues; it reads DDTLFDIDFLD. Positions 30-44 are enriched in polar residues; sequence SHSGSRSKVTNSHAN. The residue at position 102 (S102) is a Phosphoserine. The chain crosses the membrane as a helical span at residues 222-242; it reads FSKYANLFFLCTSAIQQVPHV. The involved in phosphatidylserine substrate recognition stretch occupies residues 237–238; sequence QQ. Residues 243–246 are Lumenal-facing; that stretch reads SPTN. The chain crosses the membrane as a helical span at residues 247–267; sequence RYTTIGTLLVVLIVSAMKECI. Residues 268-449 lie on the Cytoplasmic side of the membrane; the sequence is EDIKRANSDK…VEKIINRQII (182 aa). The helical transmembrane segment at 450 to 470 threads the bilayer; that stretch reads ALFTVLIVLILISSIGNVIMS. Residues 471 to 490 lie on the Lumenal side of the membrane; the sequence is TADAKHLSYLYLEGTNKAGL. Residues 491–511 traverse the membrane as a helical segment; that stretch reads FFKDFLTFWILFSNLVPISLF. Topologically, residues 512–1012 are cytoplasmic; that stretch reads VTVELIKYYQ…WSYQRISVAI (501 aa). The active-site 4-aspartylphosphate intermediate is D560. ATP-binding residues include D560, K561, T562, E655, F698, S700, K703, K721, R755, T756, T835, G836, D837, R928, and K934. Position 560 (D560) interacts with Mg(2+). T562 lines the Mg(2+) pocket. Mg(2+) is bound at residue D954. 2 residues coordinate ATP: N957 and D958. D958 lines the Mg(2+) pocket. Residues 1013–1033 form a helical membrane-spanning segment; that stretch reads LYSFYKNTALYMTQFWYVFAN. At 1034 to 1043 the chain is on the lumenal side; that stretch reads AFSGQSIMES. A helical membrane pass occupies residues 1044–1064; the sequence is WTMSFYNLFFTVWPPFVIGVF. The Cytoplasmic segment spans residues 1065–1094; the sequence is DQFVSSRLLERYPQLYKLGQKGQFFSVYIF. The helical transmembrane segment at 1095 to 1115 threads the bilayer; the sequence is WGWIINGFFHSAIVFIGTILI. The Lumenal segment spans residues 1116–1131; that stretch reads YRYGFALNMHGELADH. Residues 1132 to 1152 form a helical membrane-spanning segment; that stretch reads WSWGVTVYTTSVIIVLGKAAL. K1149 lines the a 1,2-diacyl-sn-glycero-3-phospho-(1D-myo-inositol 4-phosphate) pocket. The Cytoplasmic segment spans residues 1153 to 1161; the sequence is VTNQWTKFT. Residues 1162-1182 form a helical membrane-spanning segment; it reads LIAIPGSLLFWLIFFPIYASI. Residues 1183–1202 are Lumenal-facing; the sequence is FPHANISREYYGVVKHTYGS. A helical transmembrane segment spans residues 1203–1223; sequence GVFWLTLIVLPIFALVRDFLW. Positions 1219, 1223, 1224, 1235, and 1236 each coordinate a 1,2-diacyl-sn-glycero-3-phospho-(1D-myo-inositol 4-phosphate). The Cytoplasmic segment spans residues 1224 to 1355; it reads KYYKRMYEPE…SSRDDISFDI (132 aa). Residues 1230-1282 form an interaction with GEA2 region; that stretch reads YEPETYHVIQEMQKYNISDSRPHVQQFQNAIRKVRQVQRMKKQRGFAFSQAEE. The segment at 1231–1309 is involved in autoinhibition; that stretch reads EPETYHVIQE…KYGELQDASA (79 aa). Residues 1305-1355 are disordered; it reads QDASANPFNDNNGLGSNDFESAEPFIENPFADGNQNSNRFSSSRDDISFDI. A compositionally biased stretch (polar residues) spans 1307–1323; that stretch reads ASANPFNDNNGLGSNDF. Residues 1346–1355 are compositionally biased toward basic and acidic residues; that stretch reads SSRDDISFDI.

The protein belongs to the cation transport ATPase (P-type) (TC 3.A.3) family. Type IV subfamily. As to quaternary structure, component of a flippase complex consisting of DRS2 and CDC50. Interacts with CDC50; the interaction is direct, is required for their mutual export from the endoplasmic reticulum, and preferentially occurs when DRS2 is in the E2P state. Interacts (via C-terminus) with GEA2 (via SEC7 domain); the interaction is direct. Interacts with GEA1. Mg(2+) is required as a cofactor.

The protein localises to the golgi apparatus. It localises to the trans-Golgi network membrane. It is found in the endosome membrane. It carries out the reaction ATP + H2O + phospholipidSide 1 = ADP + phosphate + phospholipidSide 2.. The enzyme catalyses a 1,2-diacyl-sn-glycero-3-phospho-L-serine(out) + ATP + H2O = a 1,2-diacyl-sn-glycero-3-phospho-L-serine(in) + ADP + phosphate + H(+). It catalyses the reaction a 1,2-diacyl-sn-glycero-3-phosphoethanolamine(out) + ATP + H2O = a 1,2-diacyl-sn-glycero-3-phosphoethanolamine(in) + ADP + phosphate + H(+). With respect to regulation, allosterically activated by binding 1,2-diacyl-sn-glycero-3-phospho-(1D-myo-inositol 4-phosphate) (phosphatidylinositol 4-phosphate). Inhibited by orthovanadate, N-ethylmaleimide, trifluoroberyllate and tetrafluoroaluminate; orthovanadate and N-ethylmaleimide inhibit phosphorylation of the active site aspartic acid. The ATPase activity is not potently stimulated by phosphatidylinositol 3-phosphate and phosphatidylinositol 5-phosphate, phosphatidylinositol 4,5-bisphosphate or phosphatidylcholine. Not inhibited by azide. In terms of biological role, catalytic component of a P4-ATPase flippase complex which catalyzes the hydrolysis of ATP coupled to the transport of phosphatidylserine and small amounts of ethanolamine from the lumen to the cytosolic leaflet of the trans-Golgi network and ensures the maintenance of asymmetric distribution of phospholipids. Contributes to clathrin-coated vesicle formation, endocytosis, and protein trafficking between the Golgi and endosomal system. Does not appear to transport phosphatidylcholine or sphingomyelin. The chain is Phospholipid-transporting ATPase DRS2 from Saccharomyces cerevisiae (strain ATCC 204508 / S288c) (Baker's yeast).